A 454-amino-acid polypeptide reads, in one-letter code: Probable glycine dehydrogenase (decarboxylating) subunit 1 (454 aa).

It belongs to the GcvP family. N-terminal subunit subfamily. The glycine cleavage system is composed of four proteins: P, T, L and H. In this organism, the P 'protein' is a heterodimer of two subunits.

It carries out the reaction N(6)-[(R)-lipoyl]-L-lysyl-[glycine-cleavage complex H protein] + glycine + H(+) = N(6)-[(R)-S(8)-aminomethyldihydrolipoyl]-L-lysyl-[glycine-cleavage complex H protein] + CO2. In terms of biological role, the glycine cleavage system catalyzes the degradation of glycine. The P protein binds the alpha-amino group of glycine through its pyridoxal phosphate cofactor; CO(2) is released and the remaining methylamine moiety is then transferred to the lipoamide cofactor of the H protein. This chain is Probable glycine dehydrogenase (decarboxylating) subunit 1, found in Sorangium cellulosum (strain So ce56) (Polyangium cellulosum (strain So ce56)).